We begin with the raw amino-acid sequence, 496 residues long: MEKWRFNSMLSKEELEHQCGLSKSLKCTGSIGNTNGGEDLAINNMIRGWVDSDNSSNIDHLVGVSNIRSLISDDTFLVRDSNGKNYSIYFDIENQIFEIEIEGDRSFLSELESFFSSYLNLNYSYPNDGSKSDNHYYDRSMYDTQYSWNNYITSCIENYLRSEIHIDSYISSSSDNYSKSYISNYVCSGGGLNSTDSESFSIQTSANGSTFDMIGKFKNFDISPKYSHLWVQCENCYGLNYKKFFRLKLHICEQCGYHLKMSSSERIEILIDPGTWDAMDEDMVSVDPIEFHSEEEPYKDRIDSYQKKTGLTEAVQTGIGQLNGISIAIGVMDFQFMGGSMGSVVGEKITRLIEYATNGFLPLIIVCASGGARMQEGSLSLMQMAKISSASYDYQSNKKLFYVSILTSPTTGGVTASFGMLGDIIIAEPNAYIAFAGKRVIEQTLNKTVPDGSQEAEYLFQKGLFDLIVPRNLLKGVLSELFQLHGFFPLNKNFIK.

Residues 229 to 496 (LWVQCENCYG…FFPLNKNFIK (268 aa)) form the CoA carboxyltransferase N-terminal domain. Cys233, Cys236, Cys252, and Cys255 together coordinate Zn(2+). The segment at 233-255 (CENCYGLNYKKFFRLKLHICEQC) adopts a C4-type zinc-finger fold.

This sequence belongs to the AccD/PCCB family. In terms of assembly, acetyl-CoA carboxylase is a heterohexamer composed of biotin carboxyl carrier protein, biotin carboxylase and 2 subunits each of ACCase subunit alpha and ACCase plastid-coded subunit beta (accD). Zn(2+) is required as a cofactor.

It is found in the plastid. The protein resides in the chloroplast stroma. The enzyme catalyses N(6)-carboxybiotinyl-L-lysyl-[protein] + acetyl-CoA = N(6)-biotinyl-L-lysyl-[protein] + malonyl-CoA. It participates in lipid metabolism; malonyl-CoA biosynthesis; malonyl-CoA from acetyl-CoA: step 1/1. Component of the acetyl coenzyme A carboxylase (ACC) complex. Biotin carboxylase (BC) catalyzes the carboxylation of biotin on its carrier protein (BCCP) and then the CO(2) group is transferred by the transcarboxylase to acetyl-CoA to form malonyl-CoA. This is Acetyl-coenzyme A carboxylase carboxyl transferase subunit beta, chloroplastic from Ranunculus macranthus (Large buttercup).